A 1177-amino-acid chain; its full sequence is DNA-directed RNA polymerase subunit beta (1177 aa).

The tract at residues 1–36 (MEGCILADSRQSKTAASPSPSRPQSSSNNSVPGAPN) is disordered. The span at 17-32 (SPSPSRPQSSSNNSVP) shows a compositional bias: low complexity.

Belongs to the RNA polymerase beta chain family. In terms of assembly, the RNAP catalytic core consists of 2 alpha, 1 beta, 1 beta' and 1 omega subunit. When a sigma factor is associated with the core the holoenzyme is formed, which can initiate transcription.

The catalysed reaction is RNA(n) + a ribonucleoside 5'-triphosphate = RNA(n+1) + diphosphate. In terms of biological role, DNA-dependent RNA polymerase catalyzes the transcription of DNA into RNA using the four ribonucleoside triphosphates as substrates. This Mycobacterium tuberculosis (strain ATCC 25177 / H37Ra) protein is DNA-directed RNA polymerase subunit beta.